Consider the following 446-residue polypeptide: Methylenetetrahydrofolate--tRNA-(uracil-5-)-methyltransferase TrmFO (446 aa).

9–14 contributes to the FAD binding site; the sequence is GGGMAG.

This sequence belongs to the MnmG family. TrmFO subfamily. Requires FAD as cofactor.

Its subcellular location is the cytoplasm. It catalyses the reaction uridine(54) in tRNA + (6R)-5,10-methylene-5,6,7,8-tetrahydrofolate + NADH + H(+) = 5-methyluridine(54) in tRNA + (6S)-5,6,7,8-tetrahydrofolate + NAD(+). The catalysed reaction is uridine(54) in tRNA + (6R)-5,10-methylene-5,6,7,8-tetrahydrofolate + NADPH + H(+) = 5-methyluridine(54) in tRNA + (6S)-5,6,7,8-tetrahydrofolate + NADP(+). Functionally, catalyzes the folate-dependent formation of 5-methyl-uridine at position 54 (M-5-U54) in all tRNAs. In Ruegeria sp. (strain TM1040) (Silicibacter sp.), this protein is Methylenetetrahydrofolate--tRNA-(uracil-5-)-methyltransferase TrmFO.